Reading from the N-terminus, the 782-residue chain is MRQKTLDVLEFEKIKSLVANETISDLGLEKVNQMMPATNFETVVFQMEETDEIAQIYNKHRLPSLSGLSKVSAFIHRADIGGVLNVSELNLIKRLIQVQNQFKTFYNQLVEEDEGVKYPILDDKMNQLPVLTDLFHQINETCDTYDLYDNASYELQGIRSKISSTNQRIRQNLDRIVKSQANQKKLSDAIVTVRNERNVIPVKAEYRQDFNGIVHDQSASGQTLYIEPSSVVEMNNQISRLRHDEAIEKERVLTQLTGYVAADKDALLVAEQVMGQLDFLIAKARYSRSIKGTKPIFKEERTVYLPKAYHPLLNRETVVANTIEFMEDIETVIITGPNTGGKTVTLKTLGLIIVMAQSGLLIPTLDGSQLSVFKNVYCDIGDEQSIEQSLSTFSSHMTNIVEILKHADKHSLVLFDELGAGTDPSEGAALAMSILDHVRKIGSLVMATTHYPELKAYSYNREGVMNASVEFDVDTLSPTYKLLMGVPGRSNAFDISKKLGLSLNIINKAKTMIGTDEKEINEMIESLERNYKRVETQRLELDRLVKEAEQVHDDLSKQYQQFQNYEKSLIEEAKEKANQKIKAATKEADDIIKDLRQLREQKGADVKEHELIDKKKRLDDHYEAKSIKQNVQKQKYDKIVAGDEVKVLSYGQKGEVLEIVNDEEAIVQMGIIKMKLPIEDLEKKQKEKVKPTKMVTRQNRQTIKTELDLRGYRYEDALIELDQYLDQAVLSNYEQVYIIHGKGTGALQKGVQQHLKKHKSVSDFRGGMPSEGGFGVTVATLK.

336–343 (GPNTGGKT) lines the ATP pocket. In terms of domain architecture, Smr spans 707–782 (LDLRGYRYED…GFGVTVATLK (76 aa)).

Belongs to the DNA mismatch repair MutS family. MutS2 subfamily. In terms of assembly, homodimer. Binds to stalled ribosomes, contacting rRNA.

Endonuclease that is involved in the suppression of homologous recombination and thus may have a key role in the control of bacterial genetic diversity. In terms of biological role, acts as a ribosome collision sensor, splitting the ribosome into its 2 subunits. Detects stalled/collided 70S ribosomes which it binds and splits by an ATP-hydrolysis driven conformational change. Acts upstream of the ribosome quality control system (RQC), a ribosome-associated complex that mediates the extraction of incompletely synthesized nascent chains from stalled ribosomes and their subsequent degradation. Probably generates substrates for RQC. In Staphylococcus aureus (strain Mu50 / ATCC 700699), this protein is Endonuclease MutS2.